We begin with the raw amino-acid sequence, 153 residues long: Ribosome maturation factor RimP (153 aa).

It belongs to the RimP family.

Its subcellular location is the cytoplasm. Functionally, required for maturation of 30S ribosomal subunits. The polypeptide is Ribosome maturation factor RimP (Vesicomyosocius okutanii subsp. Calyptogena okutanii (strain HA)).